Here is a 164-residue protein sequence, read N- to C-terminus: Mediator of RNA polymerase II transcription subunit 21 (164 aa).

The disordered stretch occupies residues 49-81; it reads APLPANQTQQGSTLGSNRQTVSPSTQAEAESNF. The segment covering 53–81 has biased composition (polar residues); it reads ANQTQQGSTLGSNRQTVSPSTQAEAESNF. Residues 114-146 are a coiled coil; that stretch reads ESQLKIIDDLSKELQSVEQEQVKKIQEKDKLLK.

It belongs to the Mediator complex subunit 21 family. As to quaternary structure, component of the Mediator complex.

It localises to the nucleus. Its function is as follows. Component of the Mediator complex, a coactivator involved in the regulated transcription of nearly all RNA polymerase II-dependent genes. Mediator functions as a bridge to convey information from gene-specific regulatory proteins to the basal RNA polymerase II transcription machinery. Mediator is recruited to promoters by direct interactions with regulatory proteins and serves as a scaffold for the assembly of a functional preinitiation complex with RNA polymerase II and the general transcription factors. In Scheffersomyces stipitis (strain ATCC 58785 / CBS 6054 / NBRC 10063 / NRRL Y-11545) (Yeast), this protein is Mediator of RNA polymerase II transcription subunit 21 (SRB7).